Here is a 379-residue protein sequence, read N- to C-terminus: Protein hairy (379 aa).

The tract at residues 20-50 (STQQQQQQQQHKEAPIKSDRRSNKPIMEKRR) is disordered. A compositionally biased stretch (basic and acidic residues) spans 29 to 47 (QHKEAPIKSDRRSNKPIME). The interaction with Topors stretch occupies residues 36 to 55 (KSDRRSNKPIMEKRRRARIN). In terms of domain architecture, bHLH spans 38–95 (DRRSNKPIMEKRRRARINNCLNELKTLILDATKKDPARHSKLEKADILEKTVKHLQEL). An Orange domain is found at 114-143 (FKAGFADCANEVSRFPGLDSTQRRRLLQHL). Disordered regions lie at residues 167-208 (QSLH…NTTA) and 298-345 (QRTA…VKPS). 2 stretches are compositionally biased toward low complexity: residues 182-207 (PEQE…TNTT) and 301-328 (ASTG…GSYA). The WRPW motif motif lies at 376–379 (WRPW).

As to quaternary structure, transcription repression requires formation of a complex with a corepressor protein (Groucho).

It is found in the nucleus. Its function is as follows. Pair-rule protein that regulates embryonic segmentation and adult bristle patterning. Transcriptional repressor of genes that require a bHLH protein for their transcription (e.g. ftz). This Drosophila virilis (Fruit fly) protein is Protein hairy.